Reading from the N-terminus, the 952-residue chain is Probable mixed-linked glucan synthase 6 (952 aa).

2 helical membrane passes run 102-122 (LLHP…LFVI) and 132-152 (AMWL…SWLL). The active site involves Asp-227. The stretch at 278 to 308 (EEFVNDRRRVRKEYDDFKARINGLEHDIKQR) forms a coiled coil. Residues Asp-429 and Asp-431 each coordinate substrate. Residue Asp-636 is part of the active site. Transmembrane regions (helical) follow at residues 718-738 (LFLI…HFIV), 744-764 (MFYV…VLEV), 782-802 (MTAS…KVVF), 834-854 (WLMI…AVAF), 865-885 (WLKV…LYPF), and 898-918 (VVVL…YINI).

It belongs to the glycosyltransferase 2 family. Plant cellulose synthase-like F subfamily.

The protein resides in the golgi apparatus membrane. May catalyze both beta-1,3 and beta-1,4 glycosidic linkage on beta-D-glucan. Essential for (1,3;1,4)-beta-D-glucans synthesis in grasses and cereals (Poaceae). The mixed-linked glucans (which are not present in walls of dicotyledons or most other monocotyledonous plants) are particularly important constituents of the walls of the starchy endosperm and aleurone cells of cereal grains such as oats, wheat, rice and barley. They can account for up to 70% by weight of the wall. The polypeptide is Probable mixed-linked glucan synthase 6 (CSLF6) (Oryza sativa subsp. japonica (Rice)).